The sequence spans 378 residues: MLRCFLVAAAAVALAAAAAAPARAIPFTESDLSSEESLRALYERWRSRYTVSRPAASGGVGNDDGEARRRFNVFVENARYIHEANRRGGRPFRLALNKFADMTTDEFRRTYAGSRARHHRSLSGGRGGEGGSFRYGGDDEDNLPPAVDWRERGAVTGIKDQGQCGSCWAFSTVAAVEGVNKIKTGRLVTLSEQELVDCDTGDNQGCDGGLMDYAFQFIKRNGGITTESNYPYRAEQGRCNKAKASSHDVTIDGYEDVPANDESALQKAVANQPVAVAVEASGQDFQFYSEGVFTGECGTDLDHGVAAVGYGITRDGTKYWIVKNSWGEDWGERGYIRMQRGVSSDSNGLCGIAMEASYPVKSGARNAAASNRVVKDEM.

The N-terminal stretch at 1 to 24 (MLRCFLVAAAAVALAAAAAAPARA) is a signal peptide. The propeptide at 25–141 (IPFTESDLSS…SFRYGGDDED (117 aa)) is activation peptide. 3 disulfide bridges follow: Cys164–Cys206, Cys198–Cys239, and Cys297–Cys350. Residue Cys167 is part of the active site. Catalysis depends on residues His303 and Asn324.

Belongs to the peptidase C1 family.

It is found in the protein storage vacuole. Its function is as follows. Cysteine endopeptidase that digests in vitro both the acidic and basic subunits of glutelin, the major seed storage protein of rice. In Oryza sativa subsp. japonica (Rice), this protein is Cysteine endopeptidase RepA.